A 196-amino-acid chain; its full sequence is uncharacterized protein (196 aa).

A signal peptide spans 1 to 23; it reads MSARAPKELRLALPPCLLNRTFA. N-linked (GlcNAc...) asparagine glycosylation is found at Asn-19 and Asn-26. At 24–60 the chain is on the extracellular side; it reads SHNASGGSNAGIRSSGAGGGTCITQVGQQLFQSFSST. A helical membrane pass occupies residues 61–81; it reads LVLIVLVTLIFCLIVLSLSTF. Topologically, residues 82–196 are cytoplasmic; it reads HIHKRRMKKR…EGLLQTVVLS (115 aa). A disordered region spans residues 93-184; it reads MQRAQEEYER…AHAASSCLDT (92 aa). Basic and acidic residues-rich tracts occupy residues 95–106 and 124–135; these read RAQEEYERDHCS and HGKETRLERQPR. Residues 161–171 show a composition bias toward pro residues; it reads CAPPPPPPVPS. Positions 172–181 are enriched in low complexity; it reads PHGAHAASSC.

It is found in the membrane. This is an uncharacterized protein from Rattus norvegicus (Rat).